We begin with the raw amino-acid sequence, 851 residues long: Thrombospondin type-1 domain-containing protein 1 (851 aa).

The N-terminal stretch at 1–24 is a signal peptide; sequence MKPMLKDFSNLLLVVLCDYVLGEA. The Extracellular portion of the chain corresponds to 25–412; it reads EYLLLQEPVH…SPQDPVKSNN (388 aa). N-linked (GlcNAc...) asparagine glycans are attached at residues asparagine 53, asparagine 58, asparagine 69, asparagine 110, asparagine 135, and asparagine 304. One can recognise a TSP type-1 domain in the interval 339–392; the sequence is IETWGPWQPWSPCSTTCGDAVRERRRLCVTSFPSRPSCSGMSSETSPCSLEECA. 3 cysteine pairs are disulfide-bonded: cysteine 351/cysteine 386, cysteine 355/cysteine 391, and cysteine 366/cysteine 376. Residues 413–433 form a helical membrane-spanning segment; the sequence is VVTVTGISLCLFIIFATVLIT. At 434–851 the chain is on the cytoplasmic side; sequence LWRRFGRAPK…STLSVEKLVI (418 aa). Serine 462 is subject to Phosphoserine. Disordered stretches follow at residues 471–516, 626–646, and 682–777; these read SEPR…ESFQ, KSQIRSTGGRDGSSERCHSRS, and SRMR…SSPI. Positions 685–695 are enriched in basic and acidic residues; that stretch reads RTWDQMEDRCR. Over residues 765–776 the composition is skewed to polar residues; the sequence is SHRSASRKQSSP.

In terms of assembly, part of a complex composed of THSD1, PTK2/FAK1, TLN1 and VCL. Interacts with TLN1. As to expression, expressed in cerebral vascular endothelium.

It localises to the endosome membrane. It is found in the cell junction. The protein resides in the focal adhesion. Functionally, is a positive regulator of nascent focal adhesion assembly, involved in the modulation of endothelial cell attachment to the extracellular matrix. This chain is Thrombospondin type-1 domain-containing protein 1 (Thsd1), found in Mus musculus (Mouse).